Consider the following 213-residue polypeptide: Redox-sensing transcriptional repressor Rex (213 aa).

A DNA-binding region (H-T-H motif) is located at residues 18-57 (LYYRIFKRFHAEKIERANSKQIAEAIGIDSATVRRDFSYF). NAD(+) is bound at residue 92-97 (GIGNMG).

The protein belongs to the transcriptional regulatory Rex family. As to quaternary structure, homodimer.

It is found in the cytoplasm. In terms of biological role, modulates transcription in response to changes in cellular NADH/NAD(+) redox state. Binds to the promoter of the aldehyde-alcohol dehydrogenase adhE gene. Functions as a redox-dependent repressor of adhE expression. This chain is Redox-sensing transcriptional repressor Rex, found in Streptococcus pneumoniae (strain ATCC BAA-255 / R6).